Consider the following 216-residue polypeptide: Nucleoid occlusion factor SlmA (216 aa).

The tract at residues 1–23 is disordered; the sequence is MAEQLTLDSIEPEPEKQSAKIEK. Residues 13–23 show a composition bias toward basic and acidic residues; sequence EPEKQSAKIEK. An HTH tetR-type domain is found at 28–88; it reads ERRQQVLTVL…ALIENIESSL (61 aa). The segment at residues 51-70 is a DNA-binding region (H-T-H motif); it reads TTARLAKEVGVSEAALYRYF.

This sequence belongs to the nucleoid occlusion factor SlmA family. In terms of assembly, homodimer. Interacts with FtsZ.

Its subcellular location is the cytoplasm. The protein localises to the nucleoid. In terms of biological role, required for nucleoid occlusion (NO) phenomenon, which prevents Z-ring formation and cell division over the nucleoid. Acts as a DNA-associated cell division inhibitor that binds simultaneously chromosomal DNA and FtsZ, and disrupts the assembly of FtsZ polymers. SlmA-DNA-binding sequences (SBS) are dispersed on non-Ter regions of the chromosome, preventing FtsZ polymerization at these regions. This is Nucleoid occlusion factor SlmA from Mannheimia succiniciproducens (strain KCTC 0769BP / MBEL55E).